Here is a 226-residue protein sequence, read N- to C-terminus: X-linked lymphocyte-regulated protein 3C (226 aa).

The disordered stretch occupies residues 1 to 66; it reads MSSRKRKATD…QARKEKQDLV (66 aa). The span at 8–18 shows a compositional bias: basic and acidic residues; it reads ATDTAGRHSRM. Positions 21-30 are enriched in polar residues; the sequence is NLSSDDSQNP. Basic and acidic residues-rich tracts occupy residues 39-48 and 56-66; these read EVLDAGREDI and QQARKEKQDLV. Residues 155–210 adopt a coiled-coil conformation; sequence ESLTLQKNRMEEFKSLCEKYLEKLEVLRDSRGNSIAEELRRLIATLEIKLLMLHNQ.

The protein belongs to the XLR/SYCP3 family. As to expression, expressed in lymphoid cells.

This is X-linked lymphocyte-regulated protein 3C (Xlr3c) from Mus musculus (Mouse).